Reading from the N-terminus, the 912-residue chain is Vomeronasal type-2 receptor 1 (912 aa).

The signal sequence occupies residues 1–21 (MASRQISLALGFLAFLWAVLG). Residues 22 to 623 (AQNKTEEVQC…LAYGEALGFT (602 aa)) lie on the Extracellular side of the membrane. N-linked (GlcNAc...) asparagine glycosylation is found at Asn-24, Asn-38, Asn-299, and Asn-386. Residues 624–644 (LVILSIFGALVVLAVTVVYVI) traverse the membrane as a helical segment. The Cytoplasmic portion of the chain corresponds to 645–657 (HRHTPLVKANDRE). The helical transmembrane segment at 658 to 678 (LSFLIQMSLVITVLSSLLFIG) threads the bilayer. The Extracellular portion of the chain corresponds to 679 to 691 (KPCNWSCMARQIT). The chain crosses the membrane as a helical span at residues 692–712 (LALGFCLCLSSILGKTISLFF). Residues 713–732 (AYRISVSKTRLISMHPIFRK) lie on the Cytoplasmic side of the membrane. Residues 733-753 (LIVLVCVVGEIGVCAAYLVLE) form a helical membrane-spanning segment. Residues 754-778 (PPRMFKNIEIQNVKIIFECNEGSVE) lie on the Extracellular side of the membrane. Residues 779 to 799 (FLCSIFGFDVLRALLCFLTTF) traverse the membrane as a helical segment. At 800-812 (VARQLPDNYYEGK) the chain is on the cytoplasmic side. A helical membrane pass occupies residues 813–833 (CITFGMLVFFIVWISFVPAYL). Topologically, residues 834-840 (STKGKFK) are extracellular. Residues 841 to 861 (VAVEIFAILASSYGLLGCLFL) traverse the membrane as a helical segment. The Cytoplasmic portion of the chain corresponds to 862-912 (PKCFIILLRPKRNTDETVGGRVPTVDRSIQLTSASVSSELNSTTVSTVLDE).

Belongs to the G-protein coupled receptor 3 family. Expressed at the sensory surface of the vomeronasal organ.

It localises to the cell membrane. In terms of biological role, putative pheromone receptor. The polypeptide is Vomeronasal type-2 receptor 1 (Vmn2r1) (Mus musculus (Mouse)).